The chain runs to 120 residues: Ribonuclease P protein component (120 aa).

The protein belongs to the RnpA family. Consists of a catalytic RNA component (M1 or rnpB) and a protein subunit.

The enzyme catalyses Endonucleolytic cleavage of RNA, removing 5'-extranucleotides from tRNA precursor.. In terms of biological role, RNaseP catalyzes the removal of the 5'-leader sequence from pre-tRNA to produce the mature 5'-terminus. It can also cleave other RNA substrates such as 4.5S RNA. The protein component plays an auxiliary but essential role in vivo by binding to the 5'-leader sequence and broadening the substrate specificity of the ribozyme. This Mycobacterium marinum (strain ATCC BAA-535 / M) protein is Ribonuclease P protein component.